Consider the following 176-residue polypeptide: NAD(P)H-quinone oxidoreductase subunit 6, chloroplastic (176 aa).

A run of 5 helical transmembrane segments spans residues 10-30 (FLVVLLGSGLILGSMGVLLFN), 33-53 (IYSAFSLGLVLVSISLFYILA), 61-81 (AQLLIYVGAINVLIIFAVMFM), 92-112 (LWTVGNGVTFLVCTSIFVSLM), and 152-172 (FFLPFELISIILLAALIGAIA).

It belongs to the complex I subunit 6 family. In terms of assembly, NDH is composed of at least 16 different subunits, 5 of which are encoded in the nucleus.

The protein localises to the plastid. It localises to the chloroplast thylakoid membrane. The enzyme catalyses a plastoquinone + NADH + (n+1) H(+)(in) = a plastoquinol + NAD(+) + n H(+)(out). The catalysed reaction is a plastoquinone + NADPH + (n+1) H(+)(in) = a plastoquinol + NADP(+) + n H(+)(out). Functionally, NDH shuttles electrons from NAD(P)H:plastoquinone, via FMN and iron-sulfur (Fe-S) centers, to quinones in the photosynthetic chain and possibly in a chloroplast respiratory chain. The immediate electron acceptor for the enzyme in this species is believed to be plastoquinone. Couples the redox reaction to proton translocation, and thus conserves the redox energy in a proton gradient. This Cucumis sativus (Cucumber) protein is NAD(P)H-quinone oxidoreductase subunit 6, chloroplastic (ndhG).